Reading from the N-terminus, the 275-residue chain is Phosphatidylglycerol--prolipoprotein diacylglyceryl transferase (275 aa).

Transmembrane regions (helical) follow at residues 18 to 38, 55 to 75, and 89 to 109; these read IEVH…YFIA, IIFW…VIFQ, and IWHG…TGVI. Position 137 (R137) interacts with a 1,2-diacyl-sn-glycero-3-phospho-(1'-sn-glycerol). A run of 2 helical transmembrane segments spans residues 203–223 and 235–255; these read IGET…FVEG and IRVA…MIIY.

The protein belongs to the Lgt family.

It localises to the cell membrane. The catalysed reaction is L-cysteinyl-[prolipoprotein] + a 1,2-diacyl-sn-glycero-3-phospho-(1'-sn-glycerol) = an S-1,2-diacyl-sn-glyceryl-L-cysteinyl-[prolipoprotein] + sn-glycerol 1-phosphate + H(+). Its pathway is protein modification; lipoprotein biosynthesis (diacylglyceryl transfer). Catalyzes the transfer of the diacylglyceryl group from phosphatidylglycerol to the sulfhydryl group of the N-terminal cysteine of a prolipoprotein, the first step in the formation of mature lipoproteins. The chain is Phosphatidylglycerol--prolipoprotein diacylglyceryl transferase from Staphylococcus carnosus (strain TM300).